Here is a 307-residue protein sequence, read N- to C-terminus: Dioxygenase cdmD (307 aa).

Residues His-146, Asp-148, and His-226 each coordinate Fe cation.

This sequence belongs to the PhyH family. In terms of assembly, homodimer. Requires Fe cation as cofactor.

The enzyme catalyses verruculide A + 2-oxoglutarate + O2 = chrodrimanin T + succinate + CO2. The catalysed reaction is chrodrimanin E + 2-oxoglutarate + O2 = chrodrimanin A + succinate + CO2. The protein operates within secondary metabolite biosynthesis; terpenoid biosynthesis. Functionally, dioxygenase; part of the gene cluster that mediates the biosynthesis of chrodrimanin B, a meroterpenoid that acts as a potent blocker of insect GABA-gated chloride channels. The first step of the pathway is the biosynthesis of 6-hydroxymellein by the polyketide synthase cdmE. The prenyltransferase cdmH acts as a 6-hydroxymellein 5-farnesyltransferase and produces the hydrophobic metabolite verruculide C. The FAD-dependent monooxygenase cdmI further converts verruculide C into verruculide B. The terpene cyclase cdmG then produced the pentacyclic molecule 3-hydroxypentacecilide A, the backbone structure of chrodrimanin B, via folding the farnesyl moiety of the substrate into the chair-boat conformation. The short-chain dehydrogenase/reductase cdmF functions as the 3-OH dehydrogenase that oxidizes the C-3 hydroxyl group of 3-hydroxypentacecilide A and produces chrodrimanin C, the dehydrogenated product of 3-hydroxypentacecilide A. The cytochrome P450 monooxygenase cdmJ then accepts both 3-hydroxypentacecilide A and chrodrimanin C and functions as a C-7-beta-hydroxylase to produce respectively chrodrimanin H and chrodrimanin F. The dioxygenase cdmA accepts chrodrimanin H to afford chrodrimanin E, which is further transformed to chrodrimanin A by the dioxygenase cdmD. CdmA can also accept chrodrimanin C as substrate to convert it into verruculide A, which is further converted into chrodrimanin T by cdmD. The last step of the biosynthesis is proposed to be performed by the acetyltransferase cdmC which acetylates chrodrimanin A to yield chrodrimanin B. The pathway may also lead to the production of additional shunt products, including chrodrimanins T and U. This is Dioxygenase cdmD from Talaromyces verruculosus (Penicillium verruculosum).